The sequence spans 1165 residues: uncharacterized protein (1165 aa).

The tract at residues 422–442 (EAAPPRPPRKSKAPEPTGDKA) is disordered.

This is an uncharacterized protein from Frog virus 3 (isolate Goorha) (FV-3).